The sequence spans 270 residues: Phosphatidate cytidylyltransferase (270 aa).

Helical transmembrane passes span 19-39, 53-73, 76-96, 101-121, 126-146, 183-203, and 248-268; these read LWLT…IGLA, TAFS…LLIL, GALL…VTQW, GWPA…SLLR, FGFT…IAAY, LVAS…ALLL, and ALLY…AIFF.

This sequence belongs to the CDS family.

Its subcellular location is the cell inner membrane. It catalyses the reaction a 1,2-diacyl-sn-glycero-3-phosphate + CTP + H(+) = a CDP-1,2-diacyl-sn-glycerol + diphosphate. The protein operates within phospholipid metabolism; CDP-diacylglycerol biosynthesis; CDP-diacylglycerol from sn-glycerol 3-phosphate: step 3/3. The protein is Phosphatidate cytidylyltransferase (cdsA) of Brucella suis biovar 1 (strain 1330).